A 456-amino-acid polypeptide reads, in one-letter code: E3 ubiquitin-protein ligase PUB24 (456 aa).

Positions 9–83 (EIPNYFICPI…QHWCVENETR (75 aa)) constitute a U-box domain.

Auto-ubiquitinated.

It catalyses the reaction S-ubiquitinyl-[E2 ubiquitin-conjugating enzyme]-L-cysteine + [acceptor protein]-L-lysine = [E2 ubiquitin-conjugating enzyme]-L-cysteine + N(6)-ubiquitinyl-[acceptor protein]-L-lysine.. It functions in the pathway protein modification; protein ubiquitination. In terms of biological role, E3 ubiquitin-protein ligase that acts as a negative regulator of the immunity triggered by the pathogen-associated molecular patterns (PAMPs), in association with PUB22 and PUB23. The polypeptide is E3 ubiquitin-protein ligase PUB24 (PUB24) (Arabidopsis thaliana (Mouse-ear cress)).